We begin with the raw amino-acid sequence, 1098 residues long: MPIVDKLKEALKPGRKDSAEDGDLGRLLAASAKKVLLQRIEFEPASKSFSYQLESLKSKYVLLSARAEGASRHRSGDELQARKPGTERVSGSGGDGVPAPQKVLFPVERLSLRWERVFRVGAGLHNLGNTCFLNSTIQCLTYTPPLANYLLSKEHARSCHQGGFCMLCLMQNHMVQAFANSGNAIKPVSFIRDLKKIARHFRFGNQEDAHEFLRYTIDAMQKACLNGYAKLDRQTQATTLVHQIFGGYLRSRVKCSVCKSVSDTYDPYLDIALEIRQAANIVRALELFVKSDVLSGENAYMCAKCKKKVPASKRFTIHRTSNVLTLSLKRFANFSGGKITKDVGYPEFLNIRPYMSQSSGDPVMYGLYAVLVHSGYSCHAGHYYCYVKASNGQWYQMNDSLVHSSNVKVVLNQQAYVLFYLRIPGSKKSPEGPVSRVGATLPSRPKVVPEHSKKSPGNGVVPSPLMAKRQDSVMMRKLPAPEEVGVPVSRNGSLPGLKLQNGCAPAKTPAGSPSPRLTPTPTHMPTILDEPGKKVKKSAPLQSLTTSPTTSQGSPGTGESRSQRPGSWASRDTIFSTSPKLLARAITNGHRLKGEGSGVDLEKGDSSSSSPEHSASSDPAKAPQTAESRAAHACDSQGTNCPTAGHPKALLNGVDAKMVKLKSPALSSTTTEPTSLMSPPPAKKLALSAKKASTLRRATGNDIGSPSPSAFCDLTSPMKATHPVVASTGPVSKTRTAAPAPRPSTHPHSASLSSSSAKPLGTSEPQSCRPSAWTPLPQVNGHFTSHLHQLPEASEALHSPSKKRKKTPNGDPQRLGIDTLLPQCLRGAPAAARRKRKKRCSEGEGATAPKQEGQFQDQSWSSGSQKEEGTQPQVNGHQVSHILDSYHVSSRKRRKRKRSEGLSQEATPSQDLIQHSCSPVDHSEPEARTELQKKKKKKRRKRKPEPQQDEESKHPGDQRSPRPSVTPVPALSVNGHLPSDCLGLGQAPLVTWNRDQEPDVVQALLQDSSDKAYGKKVLTWDGEPSAISQDAIKDSRLARTQTVVDDWDEEFDRGKEKKIKKFKREKKRNFNAFQKLQSRRNFWSVTHPAKVASLSYRR.

Residues 72-86 (RHRSGDELQARKPGT) are compositionally biased toward basic and acidic residues. Residues 72–97 (RHRSGDELQARKPGTERVSGSGGDGV) are disordered. Residues 122–423 (AGLHNLGNTC…QAYVLFYLRI (302 aa)) enclose the USP domain. The Nucleophile role is filled by Cys131. His382 acts as the Proton acceptor in catalysis. 2 disordered regions span residues 428–464 (KSPEGPVSRVGATLPSRPKVVPEHSKKSPGNGVVPSP) and 483–574 (EVGV…RDTI). A phosphoserine mark is found at Ser429, Ser463, Ser547, and Ser578. Positions 540–558 (PLQSLTTSPTTSQGSPGTG) are enriched in low complexity. Positions 589–640 (GHRLKGEGSGVDLEKGDSSSSSPEHSASSDPAKAPQTAESRAAHACDSQGTN) are disordered. The span at 606 to 617 (SSSSSPEHSASS) shows a compositional bias: low complexity. Ser663 is modified (phosphoserine). Disordered stretches follow at residues 664–710 (PALS…SPSA) and 722–973 (HPVV…ALSV). Over residues 665 to 677 (ALSSTTTEPTSLM) the composition is skewed to polar residues. Phosphoserine is present on Ser678. Low complexity predominate over residues 683–692 (KKLALSAKKA). Position 709 is a phosphoserine (Ser709). Residues 746-763 (HPHSASLSSSSAKPLGTS) are compositionally biased toward low complexity. Residues 853 to 878 (GQFQDQSWSSGSQKEEGTQPQVNGHQ) are compositionally biased toward polar residues. Residues 889–898 (SSRKRRKRKR) are compositionally biased toward basic residues. Over residues 901-917 (GLSQEATPSQDLIQHSC) the composition is skewed to polar residues. Positions 921 to 932 (DHSEPEARTELQ) are enriched in basic and acidic residues. Positions 933-943 (KKKKKKRRKRK) are enriched in basic residues. Basic and acidic residues predominate over residues 944 to 960 (PEPQQDEESKHPGDQRS).

The protein belongs to the peptidase C19 family. In terms of assembly, interacts with isoform 3 of FBXW7; the interaction inhibits MYC degradation induced by SCF(FBW7) complex. Interacts with NTRK1; USP36 does not deubiquitinate NTRK1. Interacts with NEDD4L (via domains WW1, 3 and 4); the interaction inhibits ubiquitination of, at least, NTRK1, KCNQ2 and KCNQ3 by NEDD4L. Interacts (via C-terminus) with EXOSC10 (via C-terminus); the interaction is facilitated by the association with RNA and promotes sumoylation of EXOSC10. Post-translationally, polyubiquitinated by NEDD4L, no effect on USP36 protein levels. Both proteins interact with and regulate each other's ubiquitination levels.

Its subcellular location is the nucleus. The protein localises to the nucleolus. It is found in the cytoplasm. It catalyses the reaction Thiol-dependent hydrolysis of ester, thioester, amide, peptide and isopeptide bonds formed by the C-terminal Gly of ubiquitin (a 76-residue protein attached to proteins as an intracellular targeting signal).. Deubiquitinase essential for the regulation of nucleolar structure and function. Required for cell and organism viability. Plays an important role in ribosomal RNA processing and protein synthesis, which is mediated, at least in part, through deubiquitination of DHX33, NPM1 and FBL, regulating their protein stability. Functions as a transcriptional repressor by deubiquiting histone H2B at the promoters of genes critical for cellular differentiation, such as CDKN1A, thereby preventing histone H3 'Lys-4' trimethylation (H3K4). Specifically deubiquitinates MYC in the nucleolus, leading to prevent MYC degradation by the proteasome: acts by specifically interacting with isoform 3 of FBXW7 (FBW7gamma) in the nucleolus and counteracting ubiquitination of MYC by the SCF(FBW7) complex. In contrast, it does not interact with isoform 1 of FBXW7 (FBW7alpha) in the nucleoplasm. Interacts to and regulates the actions of E3 ubiquitin-protein ligase NEDD4L over substrates such as NTRK1, KCNQ2 and KCNQ3, affecting their expression an functions. Deubiquitinates SOD2, regulates SOD2 protein stability. Deubiquitinase activity is required to control selective autophagy activation by ubiquitinated proteins. Promotes CEP63 stabilization through 'Lys-48'-linked deubiquitination leading to increased stability. Acts as a SUMO ligase to promote EXOSC10 sumoylation critical for the nucleolar RNA exosome function in rRNA processing. Binds to pre-rRNAs. This chain is Ubiquitin carboxyl-terminal hydrolase 36 (Usp36), found in Mus musculus (Mouse).